We begin with the raw amino-acid sequence, 202 residues long: MKLVGSYTSPFVRKLSILLLEKGITFEFINELPYNADNGVAQFNPLGKVPVLVTEEGECWFDSPIIAEYIELMNVAPAMLPRDPLESLRVRKIEALADGIMDAGLVSVREQARPAAQQSEDELLRQREKINRSLDVLEGYLVDGTLKTDTVNLATIAIACAVGYLNFRRVAPGWCVDRPHLVKLVENLFSRESFARTEPPKA.

The GST N-terminal domain maps to methionine 1–alanine 78. Glutathione contacts are provided by residues serine 9, valine 49, and aspartate 62–serine 63. A GST C-terminal domain is found at aspartate 83 to alanine 202.

The protein belongs to the GST superfamily. HSP26 family.

Functionally, glutathione (GSH) transferase homolog, that might be involved in selenium metabolism. This is an uncharacterized protein from Escherichia coli (strain K12).